Reading from the N-terminus, the 826-residue chain is Putative pentatricopeptide repeat-containing protein At1g13630 (826 aa).

16 PPR repeats span residues 228–262, 263–297, 298–332, 333–367, 368–402, 404–438, 439–473, 474–508, 509–543, 544–578, 579–613, 614–648, 661–695, 696–730, 731–765, and 766–800; these read NEHT…DIGP, SVVS…GLVP, SVYS…GVEP, DSVT…GLSP, DVIT…GFEL, SIIP…GLSP, DLVA…RILP, NSRT…GETL, DIVL…GITP, SVAT…GLAP, SVVS…GIPP, TNVT…KCKQ, DQIT…NLDA, SSAT…NVSL, SKFA…GFNV, and SIRD…GISP.

It belongs to the PPR family. P subfamily.

This is Putative pentatricopeptide repeat-containing protein At1g13630 from Arabidopsis thaliana (Mouse-ear cress).